A 389-amino-acid chain; its full sequence is Lipid-A-disaccharide synthase (389 aa).

Belongs to the LpxB family.

The catalysed reaction is a lipid X + a UDP-2-N,3-O-bis[(3R)-3-hydroxyacyl]-alpha-D-glucosamine = a lipid A disaccharide + UDP + H(+). It participates in bacterial outer membrane biogenesis; LPS lipid A biosynthesis. Condensation of UDP-2,3-diacylglucosamine and 2,3-diacylglucosamine-1-phosphate to form lipid A disaccharide, a precursor of lipid A, a phosphorylated glycolipid that anchors the lipopolysaccharide to the outer membrane of the cell. The polypeptide is Lipid-A-disaccharide synthase (Burkholderia orbicola (strain MC0-3)).